We begin with the raw amino-acid sequence, 331 residues long: ESX-3 secretion system protein EccE3 (331 aa).

Transmembrane regions (helical) follow at residues 11-31 (GRVTLVLLAVVPVALAYPWQS) and 37-57 (LLGVAAAVVIGLFGFWRGLYF).

This sequence belongs to the EccE family. As to quaternary structure, part of the ESX-3 / type VII secretion system (T7SS), which is composed of cytosolic and membrane components. The ESX-3 membrane complex is composed of EccB3, EccC3, EccD3 and EccE3.

Its subcellular location is the cell inner membrane. Its function is as follows. Part of the ESX-3 specialized secretion system, which is important for iron and zinc uptake or homeostasis. The chain is ESX-3 secretion system protein EccE3 from Mycobacterium tuberculosis (strain ATCC 25618 / H37Rv).